The primary structure comprises 301 residues: Probable alpha-L-glutamate ligase (301 aa).

Residues 104–287 enclose the ATP-grasp domain; sequence MQLLSRKGIG…VAGLIVDFIE (184 aa). Residues Lys-141, 178–179, Asp-187, and 211–213 contribute to the ATP site; these read EF and RSN. Residues Asp-248, Glu-260, and Asn-262 each coordinate Mg(2+). Asp-248, Glu-260, and Asn-262 together coordinate Mn(2+).

The protein belongs to the RimK family. Mg(2+) is required as a cofactor. Mn(2+) serves as cofactor.

This Aliivibrio salmonicida (strain LFI1238) (Vibrio salmonicida (strain LFI1238)) protein is Probable alpha-L-glutamate ligase.